The sequence spans 433 residues: Trigger factor (433 aa).

The PPIase FKBP-type domain occupies glycine 166 to proline 251.

This sequence belongs to the FKBP-type PPIase family. Tig subfamily.

It localises to the cytoplasm. The catalysed reaction is [protein]-peptidylproline (omega=180) = [protein]-peptidylproline (omega=0). Involved in protein export. Acts as a chaperone by maintaining the newly synthesized protein in an open conformation. Functions as a peptidyl-prolyl cis-trans isomerase. The protein is Trigger factor of Aliarcobacter butzleri (strain RM4018) (Arcobacter butzleri).